Reading from the N-terminus, the 659-residue chain is DNA mismatch repair protein MutL (659 aa).

A disordered region spans residues G338–P459. Residues S352 to A362 are compositionally biased toward basic and acidic residues. Over residues S374–P391 the composition is skewed to polar residues.

The protein belongs to the DNA mismatch repair MutL/HexB family.

Its function is as follows. This protein is involved in the repair of mismatches in DNA. It is required for dam-dependent methyl-directed DNA mismatch repair. May act as a 'molecular matchmaker', a protein that promotes the formation of a stable complex between two or more DNA-binding proteins in an ATP-dependent manner without itself being part of a final effector complex. The sequence is that of DNA mismatch repair protein MutL from Halobacterium salinarum (strain ATCC 29341 / DSM 671 / R1).